Here is a 95-residue protein sequence, read N- to C-terminus: MKTLVLLSALVLLAFQVQADPIQNTDEETNTEEQPGEEDQAVSVSFGDPEGSALHEKSSRDLICYCRKGGCNRGEQVYGTCSGRLLFCCRRRHRH.

The signal sequence occupies residues 1-19 (MKTLVLLSALVLLAFQVQA). The propeptide occupies 20 to 58 (DPIQNTDEETNTEEQPGEEDQAVSVSFGDPEGSALHEKS). The disordered stretch occupies residues 22–57 (IQNTDEETNTEEQPGEEDQAVSVSFGDPEGSALHEK). The segment covering 25 to 40 (TDEETNTEEQPGEEDQ) has biased composition (acidic residues). Cystine bridges form between C64–C89, C66–C81, and C71–C88.

This sequence belongs to the alpha-defensin family.

Its subcellular location is the secreted. Functionally, may have microbicidal activities. The sequence is that of Alpha-defensin 20 (Defa20) from Mus musculus (Mouse).